Here is a 749-residue protein sequence, read N- to C-terminus: G-type lectin S-receptor-like serine/threonine-protein kinase At1g61460 (749 aa).

The N-terminal stretch at Met1–Ala25 is a signal peptide. In terms of domain architecture, Bulb-type lectin spans Gly26–Phe145. Residues Gly26–Thr392 lie on the Extracellular side of the membrane. 4 N-linked (GlcNAc...) asparagine glycosylation sites follow: Asn54, Asn95, Asn118, and Asn135. The 34-residue stretch at Pro247–Glu280 folds into the EGF-like; atypical domain. Disulfide bonds link Cys251–Cys263 and Cys257–Cys268. N-linked (GlcNAc...) asparagine glycosylation is found at Asn286, Asn302, and Asn341. Residues Cys299–Arg381 form the PAN domain. Intrachain disulfides connect Cys334–Cys355 and Cys338–Cys344. The helical transmembrane segment at Ile393–Phe413 threads the bilayer. The Cytoplasmic segment spans residues Trp414–Arg749. One can recognise a Protein kinase domain in the interval Phe454–Phe721. ATP contacts are provided by residues Leu460–Val468 and Lys482. Residues Arg543–Ile560 are caM-binding. Asp579 serves as the catalytic Proton acceptor.

The protein belongs to the protein kinase superfamily. Ser/Thr protein kinase family.

Its subcellular location is the cell membrane. The catalysed reaction is L-seryl-[protein] + ATP = O-phospho-L-seryl-[protein] + ADP + H(+). The enzyme catalyses L-threonyl-[protein] + ATP = O-phospho-L-threonyl-[protein] + ADP + H(+). The polypeptide is G-type lectin S-receptor-like serine/threonine-protein kinase At1g61460 (Arabidopsis thaliana (Mouse-ear cress)).